Here is a 479-residue protein sequence, read N- to C-terminus: UDP-glycosyltransferase 71B6 (479 aa).

UDP-alpha-D-glucose-binding positions include Ser275, 342–344, 359–367, and 381–384; these read AEQ, HGGWNSTLE, and YAEQ.

This sequence belongs to the UDP-glycosyltransferase family.

Its function is as follows. Glucosyltransferase that glucosylates the (+) enantiomer of abscisic acid ((+)-ABA). Is not active on structural analogs with alterations to the 8'- and 9'- methyl groups. The protein is UDP-glycosyltransferase 71B6 (UGT71B6) of Arabidopsis thaliana (Mouse-ear cress).